The sequence spans 642 residues: Threonine--tRNA ligase (642 aa).

The region spanning 1-61 is the TGS domain; the sequence is MPVITLPDGS…ETDSDLSIIT (61 aa). The interval 243–534 is catalytic; the sequence is DHRKIGKQLD…LIEEYAGKFP (292 aa). Residues Cys-334, His-385, and His-511 each coordinate Zn(2+).

The protein belongs to the class-II aminoacyl-tRNA synthetase family. Homodimer. Zn(2+) is required as a cofactor.

The protein resides in the cytoplasm. The enzyme catalyses tRNA(Thr) + L-threonine + ATP = L-threonyl-tRNA(Thr) + AMP + diphosphate + H(+). Its function is as follows. Catalyzes the attachment of threonine to tRNA(Thr) in a two-step reaction: L-threonine is first activated by ATP to form Thr-AMP and then transferred to the acceptor end of tRNA(Thr). Also edits incorrectly charged L-seryl-tRNA(Thr). The sequence is that of Threonine--tRNA ligase from Shewanella pealeana (strain ATCC 700345 / ANG-SQ1).